We begin with the raw amino-acid sequence, 338 residues long: Mitoferrin-1 (338 aa).

Residues 1-37 are disordered; sequence MELRRGGVGSQAAGRRMDGDCRDGGCGSKDAGSEDYE. 3 Solcar repeats span residues 43–131, 141–225, and 232–326; these read ASVS…MKRT, NSHL…LQEQ, and YNPQ…FKYF. Helical transmembrane passes span 45-64, 106-125, 143-162, 200-219, 234-253, and 301-320; these read VSTH…SIMY, GLNV…FACY, HLAN…AVMN, SYTT…FITY, PQSH…AATT, and GIQA…WSVY.

The protein belongs to the mitochondrial carrier (TC 2.A.29) family. As to quaternary structure, interacts with ACB10; this interaction stabilizes SLC25A37 and enhances the function of SLC25A37 to import mitochondrial iron during erythroid differentiation.

The protein localises to the mitochondrion inner membrane. The catalysed reaction is Fe(2+)(in) = Fe(2+)(out). Functionally, mitochondrial iron transporter that specifically mediates iron uptake in developing erythroid cells, thereby playing an essential role in heme biosynthesis. The sequence is that of Mitoferrin-1 (Slc25a37) from Rattus norvegicus (Rat).